The sequence spans 429 residues: Nocturnin (429 aa).

Residues 1 to 73 constitute a mitochondrion transit peptide; that stretch reads MYQSPRRLCS…SMGNGTSRLY (73 aa). Residues 21–68 are disordered; that stretch reads RRTLVPGPRRTLAPPVLGSRPKSPQLQAAAASGAARSRPRTVSSMGNG. Glutamate 193 lines the Mg(2+) pocket. Substrate is bound by residues glutamate 193, 217 to 219, asparagine 261, 284 to 287, and 322 to 324; these read KPW, HLKA, and DFN. Positions 341–351 are interaction with PPARG; the sequence is NLNSAYKLLSP. Histidine 412 serves as a coordination point for substrate.

The protein belongs to the CCR4/nocturin family. Interacts with PPARG. Mg(2+) is required as a cofactor. Highly expressed in the differentiated adipocyte (at protein level). Ubiquitous.

The protein localises to the cytoplasm. It localises to the nucleus. The protein resides in the perinuclear region. It is found in the mitochondrion. The catalysed reaction is NADP(+) + H2O = phosphate + NAD(+). It catalyses the reaction NADPH + H2O = phosphate + NADH. Its function is as follows. Phosphatase which catalyzes the conversion of NADP(+) to NAD(+) and of NADPH to NADH. Shows a small preference for NADPH over NADP(+). Represses translation and promotes degradation of target mRNA molecules. Plays an important role in post-transcriptional regulation of metabolic genes under circadian control. Exerts a rhythmic post-transcriptional control of genes necessary for metabolic functions including nutrient absorption, glucose/insulin sensitivity, lipid metabolism, adipogenesis, inflammation and osteogenesis. Plays an important role in favoring adipogenesis over osteoblastogenesis and acts as a key regulator of the adipogenesis/osteogenesis balance. Promotes adipogenesis by facilitating PPARG nuclear translocation which activates its transcriptional activity. Regulates circadian expression of NOS2 in the liver and negatively regulates the circadian expression of IGF1 in the bone. Critical for proper development of early embryos. The sequence is that of Nocturnin from Mus musculus (Mouse).